The chain runs to 118 residues: MSRRIKKLNQLFRADISALLQKEIRDPRLDTLLSVNEVDISEDMRHANVYVSHLAGDEHKDEILAALNAAAGFFRTEIAKKTDIRYMPVFHFVWDITIERGVRLNTLIDQVIHHQPED.

It belongs to the RbfA family. Monomer. Binds 30S ribosomal subunits, but not 50S ribosomal subunits or 70S ribosomes.

The protein localises to the cytoplasm. In terms of biological role, one of several proteins that assist in the late maturation steps of the functional core of the 30S ribosomal subunit. Associates with free 30S ribosomal subunits (but not with 30S subunits that are part of 70S ribosomes or polysomes). Required for efficient processing of 16S rRNA. May interact with the 5'-terminal helix region of 16S rRNA. This chain is Ribosome-binding factor A, found in Dehalococcoides mccartyi (strain ATCC BAA-2100 / JCM 16839 / KCTC 5957 / BAV1).